The chain runs to 303 residues: Aspartate carbamoyltransferase catalytic subunit (303 aa).

Positions 51 and 52 each coordinate carbamoyl phosphate. An L-aspartate-binding site is contributed by lysine 80. Residues arginine 101, histidine 129, and glutamine 132 each contribute to the carbamoyl phosphate site. Residues arginine 162 and arginine 221 each contribute to the L-aspartate site. Positions 260 and 261 each coordinate carbamoyl phosphate.

Belongs to the aspartate/ornithine carbamoyltransferase superfamily. ATCase family. As to quaternary structure, heterooligomer of catalytic and regulatory chains.

The catalysed reaction is carbamoyl phosphate + L-aspartate = N-carbamoyl-L-aspartate + phosphate + H(+). The protein operates within pyrimidine metabolism; UMP biosynthesis via de novo pathway; (S)-dihydroorotate from bicarbonate: step 2/3. Catalyzes the condensation of carbamoyl phosphate and aspartate to form carbamoyl aspartate and inorganic phosphate, the committed step in the de novo pyrimidine nucleotide biosynthesis pathway. This is Aspartate carbamoyltransferase catalytic subunit from Saccharolobus islandicus (strain Y.N.15.51 / Yellowstone #2) (Sulfolobus islandicus).